A 549-amino-acid chain; its full sequence is Nectin-3 (549 aa).

The N-terminal stretch at 1–57 (MARTPGPAPLCPGGGKAQLSSAFPPAAGLLLPAPTPPPLLLLLIPLLLFSRLCGALA) is a signal peptide. The Ig-like V-type domain occupies 58–165 (GSIIVEPHVT…GNAQSSTTVT (108 aa)). Over 58–404 (GSIIVEPHVT…ATLKDDTIGT (347 aa)) the chain is Extracellular. 6 N-linked (GlcNAc...) asparagine glycosylation sites follow: Asn-73, Asn-83, Asn-125, Asn-186, Asn-222, and Asn-331. A disulfide bridge links Cys-78 with Cys-148. Ig-like C2-type domains lie at 170–258 (PTVS…KDIR) and 269–354 (PEVS…KVIY). 2 disulfide bridges follow: Cys-193-Cys-246 and Cys-291-Cys-338. A helical membrane pass occupies residues 405-425 (IIASVVGGALFLVLVSILAGV). Residues 426–549 (FCYRRRRTFR…SVISRREWYV (124 aa)) are Cytoplasmic-facing.

It belongs to the nectin family. As to quaternary structure, cis- and trans-homodimer. Can form trans-heterodimers with NECTIN1, NECTIN2, PVR, IGSF4B/Necl-1 and with IGSF4. Interaction between NECTIN1 and NECTIN3 on the pre- and postsynaptic sites, respectively, initiates the formation of puncta adherentia junctions between axons and dendrites. Interacts (via Cytoplasmic domain) with AFDN, providing a connection with the actin cytoskeleton. Binds with low affinity to TIGIT. In terms of tissue distribution, ubiquitous with high expression in testes. Localized in spermatids at Sertoli-spermatid junctions. Expressed in ovarian granulosa cells, but only faintly expressed after ovulation.

The protein resides in the cell membrane. Its subcellular location is the postsynaptic cell membrane. It is found in the cell junction. It localises to the adherens junction. Its function is as follows. Cell adhesion molecule that promotes cell-cell adhesion through heterophilic trans-interactions with nectins-like or other nectins, such as trans-interaction with NECTIN2 at Sertoli-spermatid junctions. Trans-interaction with PVR induces activation of CDC42 and RAC small G proteins through common signaling molecules such as SRC and RAP1. Induces endocytosis-mediated down-regulation of PVR from the cell surface, resulting in reduction of cell movement and proliferation. Involved in axon guidance by promoting contacts between the commissural axons and the floor plate cells. Also involved in the formation of cell-cell junctions, including adherens junctions and synapses. Promotes formation of checkerboard-like cellular pattern of hair cells and supporting cells in the auditory epithelium via heterophilic interaction with NECTIN1: NECTIN1 is present in the membrane of hair cells and associates with NECTIN3 on supporting cells, thereby mediating heterotypic adhesion between these two cell types. Plays a role in the morphology of the ciliary body. In Mus musculus (Mouse), this protein is Nectin-3.